A 184-amino-acid chain; its full sequence is MDTQKIEAAVKMIIEAVGEDANREGLQETPARVARMYQEIFSGLGQTAEEHLSKSFEIIDDNMVVEKDIFFHTMCEHHFLPFYGRAHIAYIPDGRVAGLSKLARTVEVYSKKPQIQERLNIEVADALMDYLGAKGAFVIIEAEHMCMSMRGVRKPGTATLTTVARGLFETDKDLRDQAYRLMGL.

3 residues coordinate Zn(2+): Cys-75, His-78, and Cys-146.

Belongs to the GTP cyclohydrolase I family. As to quaternary structure, toroid-shaped homodecamer, composed of two pentamers of five dimers.

It catalyses the reaction GTP + H2O = 7,8-dihydroneopterin 3'-triphosphate + formate + H(+). The protein operates within cofactor biosynthesis; 7,8-dihydroneopterin triphosphate biosynthesis; 7,8-dihydroneopterin triphosphate from GTP: step 1/1. In Streptococcus pneumoniae serotype 2 (strain D39 / NCTC 7466), this protein is GTP cyclohydrolase 1.